We begin with the raw amino-acid sequence, 962 residues long: MTKQTLTQLEQHDLFLRRHIGPDSSQQQEMLNYVGAESLDDLTAQIVPESIRLSQELSIGDSCGEAEGIAYIRGLAKQNQVFKSYIGMGYYGTQVPNVILRNVFENPGWYTAYTPYQPEIAQGRLEAILNFQQVSMDLTGLDLASASLLDEATAAAEAMALAKRVSKAKKANIFFVADDVFPQTLDVVKTRAECFGFEVVVGPAHEAVNHELFGALFQYSNRFGQITDFTDLFAELRAKNVIVTVAADIMALVLLKSPGAMGADVVFGSAQRFGVPMGFGGPHAAFFVARDEHKRSMPGRIIGVSKDTRGNRALRMAMQTREQHIRREKANSNICTAQILLANMASFYAVFHGPQGLKTIASRINRFTDILAAGLQAKGVSLVNNTWFDTISIKGLDVAAVNARALAAEMNLRFDADGIVGVSLDETTLRTDIDALFDVILGAGHGLDVAALDAQIVAQGSQSIPEALVRQDAILTHPTFNRYQSETEMMRYIKRLESKDLALNYSMISLGSCTMKLNAAVEMLPVSWPEFANMHPFCPLDQAKGYTQLIEELSSWLVNVTGYDAVCIQPNSGAQGEYAGLLAIRKYHESRGQAHRNICLIPQSAHGTNPASAQLAGMQVVVTACDKQGNVDLEDLKAKAAEVAENLSCIMITYPSTHGVYEESIREICNIVHQHGGQVYLDGANMNAQVGLTSPGFIGADVSHLNLHKTFAIPHGGGGPGMGPIGVKAHLAPFVAGHVVVKPGRESDNNGAVSAAPYGSAGILPISWMYIKLLGSNGLKKSTQTALLNANYVMKKLSEHYPVLFRGRNDRVAHECIIDLRPIKEASGVTEMDIAKRLNDYGFHAPTMSFPVAGTLMIEPTESESKVELDRFIDAMVSIRAEIAKVEAGEWPADNNPLHNAPHTMADIMDSAFDSRPYSREVAVFPSAAVRTNKFWPTVNRIDDVYGDRNLFCACVPLSDYE.

Lys-709 bears the N6-(pyridoxal phosphate)lysine mark.

It belongs to the GcvP family. The glycine cleavage system is composed of four proteins: P, T, L and H. Pyridoxal 5'-phosphate serves as cofactor.

It carries out the reaction N(6)-[(R)-lipoyl]-L-lysyl-[glycine-cleavage complex H protein] + glycine + H(+) = N(6)-[(R)-S(8)-aminomethyldihydrolipoyl]-L-lysyl-[glycine-cleavage complex H protein] + CO2. Its function is as follows. The glycine cleavage system catalyzes the degradation of glycine. The P protein binds the alpha-amino group of glycine through its pyridoxal phosphate cofactor; CO(2) is released and the remaining methylamine moiety is then transferred to the lipoamide cofactor of the H protein. This is Glycine dehydrogenase (decarboxylating) from Shewanella sp. (strain MR-4).